The sequence spans 209 residues: Small ribosomal subunit protein uS3 (209 aa).

The KH type-2 domain maps to 38–107 (IRNFIKKNYN…KFGIDIIELK (70 aa)).

The protein belongs to the universal ribosomal protein uS3 family. Part of the 30S ribosomal subunit. Forms a tight complex with proteins S10 and S14.

Binds the lower part of the 30S subunit head. Binds mRNA in the 70S ribosome, positioning it for translation. The sequence is that of Small ribosomal subunit protein uS3 from Fervidobacterium nodosum (strain ATCC 35602 / DSM 5306 / Rt17-B1).